A 941-amino-acid polypeptide reads, in one-letter code: Glycine dehydrogenase (decarboxylating) (941 aa).

Lys692 is modified (N6-(pyridoxal phosphate)lysine).

It belongs to the GcvP family. In terms of assembly, the glycine cleavage system is composed of four proteins: P, T, L and H. Requires pyridoxal 5'-phosphate as cofactor.

The enzyme catalyses N(6)-[(R)-lipoyl]-L-lysyl-[glycine-cleavage complex H protein] + glycine + H(+) = N(6)-[(R)-S(8)-aminomethyldihydrolipoyl]-L-lysyl-[glycine-cleavage complex H protein] + CO2. Functionally, the glycine cleavage system catalyzes the degradation of glycine. The P protein binds the alpha-amino group of glycine through its pyridoxal phosphate cofactor; CO(2) is released and the remaining methylamine moiety is then transferred to the lipoamide cofactor of the H protein. The chain is Glycine dehydrogenase (decarboxylating) from Mycobacterium avium (strain 104).